The sequence spans 274 residues: 2,3,4,5-tetrahydropyridine-2,6-dicarboxylate N-succinyltransferase (274 aa).

Residues Arg104 and Asp141 each coordinate substrate.

The protein belongs to the transferase hexapeptide repeat family. As to quaternary structure, homotrimer.

It localises to the cytoplasm. The catalysed reaction is (S)-2,3,4,5-tetrahydrodipicolinate + succinyl-CoA + H2O = (S)-2-succinylamino-6-oxoheptanedioate + CoA. The protein operates within amino-acid biosynthesis; L-lysine biosynthesis via DAP pathway; LL-2,6-diaminopimelate from (S)-tetrahydrodipicolinate (succinylase route): step 1/3. The protein is 2,3,4,5-tetrahydropyridine-2,6-dicarboxylate N-succinyltransferase of Shewanella frigidimarina (strain NCIMB 400).